A 209-amino-acid chain; its full sequence is Outer-membrane lipoprotein carrier protein (209 aa).

Positions 1–22 (MKKLLLTLAMVPAVLFSPTAWG) are cleaved as a signal peptide.

Belongs to the LolA family. In terms of assembly, monomer.

Its subcellular location is the periplasm. Participates in the translocation of lipoproteins from the inner membrane to the outer membrane. Only forms a complex with a lipoprotein if the residue after the N-terminal Cys is not an aspartate (The Asp acts as a targeting signal to indicate that the lipoprotein should stay in the inner membrane). The polypeptide is Outer-membrane lipoprotein carrier protein (Alcanivorax borkumensis (strain ATCC 700651 / DSM 11573 / NCIMB 13689 / SK2)).